Here is a 137-residue protein sequence, read N- to C-terminus: Basic phospholipase A2 2 (137 aa).

Residues 1 to 11 (LVAVCVSLLGA) form the signal peptide. A propeptide spanning residues 12–19 (ANIPPQPL) is cleaved from the precursor. Disulfide bonds link Cys30–Cys89, Cys44–Cys136, Cys46–Cys62, Cys61–Cys117, Cys68–Cys110, Cys78–Cys103, and Cys96–Cys108. Positions 45 and 47 each coordinate Ca(2+). Position 48 (Tyr48) interacts with alpha-D-mannopyranose. Gly49 is a binding site for Ca(2+). His65 is a catalytic residue. Asp66 is a binding site for Ca(2+). Asp66 is a binding site for alpha-D-mannopyranose. Asp111 is a catalytic residue.

It belongs to the phospholipase A2 family. Group I subfamily. D49 sub-subfamily. In terms of assembly, homodimer; non-covalently linked. It depends on Ca(2+) as a cofactor. Post-translationally, homodimerization and interaction of the catalytically important Asp-49 (here Asp-111) with mannose molecules may render this protein inactive. As to expression, expressed by the venom gland.

The protein resides in the secreted. The catalysed reaction is a 1,2-diacyl-sn-glycero-3-phosphocholine + H2O = a 1-acyl-sn-glycero-3-phosphocholine + a fatty acid + H(+). Its function is as follows. Snake venom phospholipase A2 (PLA2) that shows anticoagulant and neurotoxic activities. Functionally, PLA2 catalyzes the calcium-dependent hydrolysis of the 2-acyl groups in 3-sn-phosphoglycerides. The polypeptide is Basic phospholipase A2 2 (Bungarus caeruleus (Indian krait)).